A 379-amino-acid polypeptide reads, in one-letter code: Probable protein arginine N-methyltransferase 6.1 (379 aa).

The tract at residues methionine 1–alanine 35 is disordered. The segment covering leucine 19 to alanine 35 has biased composition (low complexity). The SAM-dependent MTase PRMT-type domain maps to aspartate 45 to methionine 379. Residues histidine 58, arginine 67, glycine 91, glutamate 113, and glutamate 142 each coordinate S-adenosyl-L-methionine. Active-site residues include glutamate 156 and glutamate 165.

The protein belongs to the class I-like SAM-binding methyltransferase superfamily. Protein arginine N-methyltransferase family. PRMT6 subfamily.

Its function is as follows. Arginine methyltransferase that can both catalyze the formation of omega-N monomethylarginine (MMA) and asymmetrical dimethylarginine (aDMA). In Oryza sativa subsp. indica (Rice), this protein is Probable protein arginine N-methyltransferase 6.1 (PRMT6.1).